Consider the following 1827-residue polypeptide: Phenolphthiocerol/phthiocerol polyketide synthase subunit C (1827 aa).

The region spanning 35–461 is the Ketosynthase family 3 (KS3) domain; that stretch reads CEPVAVVGIG…GTNAHVVVEQ (427 aa). Residues cysteine 207, histidine 342, and histidine 383 each act as for beta-ketoacyl synthase activity in the active site. An acyltransferase region spans residues 566–876; that stretch reads VFVYSGQGSQ…LAAVGVAASE (311 aa). Catalysis depends on serine 654, which acts as the For malonyltransferase activity. Residues 910 to 1037 are N-terminal hotdog fold; it reads HPLLGAHIEM…AKVEQSPREC (128 aa). The dehydratase stretch occupies residues 910-1076; it reads HPLLGAHIEM…QHHGPAFAAL (167 aa). In terms of domain architecture, PKS/mFAS DH spans 910 to 1198; sequence HPLLGAHIEM…LRRVERRAVP (289 aa). The active-site Proton acceptor; for dehydratase activity is the histidine 942. Residues 1050–1198 form a C-terminal hotdog fold region; that stretch reads GTTVSPADFY…LRRVERRAVP (149 aa). The active-site Proton donor; for dehydratase activity is aspartate 1111. Residues 1439–1617 are beta-ketoacyl reductase; that stretch reads ASYVVTGGLG…VINWGPWSEV (179 aa). NADP(+) is bound at residue 1440 to 1485; it reads SYVVTGGLGGLGLVVARWLVDRGAGRVVLGGRSDPTDEQCNVLAEL. Residues 1706–1785 enclose the Carrier domain; it reads RAVTERMCAR…DLTADLMRQL (80 aa). Serine 1745 bears the O-(pantetheine 4'-phosphoryl)serine mark. Basic residues predominate over residues 1807 to 1820; it reads RAAARHGAAMRRRP. A disordered region spans residues 1807-1827; it reads RAAARHGAAMRRRPKPEVQGG.

NADP(+) is required as a cofactor. Requires pantetheine 4'-phosphate as cofactor.

The catalysed reaction is icosanoyl-[(phenol)carboxyphthiodiolenone synthase] + 2 (S)-methylmalonyl-CoA + 3 malonyl-CoA + 5 NADPH + 10 H(+) = C32-carboxyphthiodiolenone-[(phenol)carboxyphthiodiolenone synthase] + 5 CO2 + 5 NADP(+) + 5 CoA + 2 H2O. The enzyme catalyses docosanoyl-[(phenol)carboxyphthiodiolenone synthase] + 2 (S)-methylmalonyl-CoA + 3 malonyl-CoA + 5 NADPH + 10 H(+) = C34-carboxyphthiodiolenone-[(phenol)carboxyphthiodiolenone synthase] + 5 CO2 + 5 NADP(+) + 5 CoA + 2 H2O. It catalyses the reaction 17-(4-hydroxyphenyl)heptadecanoyl-[(phenol)carboxyphthiodiolenone synthase] + 2 (S)-methylmalonyl-CoA + 3 malonyl-CoA + 5 NADPH + 10 H(+) = C35-(phenol)carboxyphthiodiolenone-[(phenol)carboxyphthiodiolenone synthase] + 5 CO2 + 5 NADP(+) + 5 CoA + 2 H2O. It carries out the reaction 19-(4-hydroxyphenyl)nonadecanoyl-[(phenol)carboxyphthiodiolenone synthase] + 2 (S)-methylmalonyl-CoA + 3 malonyl-CoA + 5 NADPH + 10 H(+) = C37-(phenol)carboxyphthiodiolenone-[(phenol)carboxyphthiodiolenone synthase] + 5 CO2 + 5 NADP(+) + 5 CoA + 2 H2O. Its pathway is lipid metabolism; fatty acid biosynthesis. Its function is as follows. Part of the PpsABCDE complex involved in the biosynthesis of the lipid core common to phthiocerols and phenolphthiocerols by successive additions of malonyl-CoA or methylmalonyl-CoA extender units. PpsA can accept as substrate the activated forms of either icosanoyl (C20), docosanoyl (C22) or lignoceroyl (C24) groups from FadD26, or a (4-hydroxyphenyl)-C17 or (4-hydroxyphenyl)-C19 fatty acyl from FadD29. PpsA initiates the biosynthesis and extends its substrate using a malonyl-CoA extender unit. The PpsB and PpsC proteins add the second and third malonyl-CoA extender units. PpsD adds an (R)-methylmalonyl unit and PpsE adds a second (R)-methylmalonyl unit. The incorporation of the methylmalonyl units results in formation of two branched methyl groups in the elongated product. This Mycobacterium tuberculosis (strain CDC 1551 / Oshkosh) protein is Phenolphthiocerol/phthiocerol polyketide synthase subunit C (ppsD).